The primary structure comprises 751 residues: Serine/threonine-protein kinase B-raf (751 aa).

Positions 1-32 are enriched in gly residues; that stretch reads MAALSGGGGSSSGGGGGGGGGGGGGDGGGGAE. The interval 1-55 is disordered; that stretch reads MAALSGGGGSSSGGGGGGGGGGGGGDGGGGAEQGQALFNGDMEPEAGAGAAASSA. Ala-2 bears the N-acetylalanine mark. Positions 46-55 are enriched in low complexity; the sequence is AGAGAAASSA. Position 135 is a phosphoserine (Ser-135). The region spanning 139-211 is the RBD domain; sequence PIVRVFLPNK…TGEELHVEVL (73 aa). Positions 219, 232, 235, 245, 248, 253, 256, and 264 each coordinate Zn(2+). Residues 288–440 are disordered; it reads EASFPETALP…SSDDWEIPDG (153 aa). Residues 297–324 show a composition bias toward low complexity; sequence PSGSSSAPPSDSTGPQILTSPSPSKSIP. Position 316 is a phosphoserine (Ser-316). Positions 331 to 346 are enriched in basic and acidic residues; sequence PADEDHRNQFGQRDRS. The residue at position 348 (Ser-348) is a Phosphoserine. Position 356 is a phosphothreonine; by autocatalysis (Thr-356). Thr-379 bears the Phosphothreonine mark. Ser-382 is modified (phosphoserine). The residue at position 384 (Thr-384) is a Phosphothreonine. A compositionally biased stretch (basic and acidic residues) spans 406 to 432; it reads QRERKSSSSSSSEDRSRMKTLGRRDSS. Phosphoserine occurs at positions 431 and 432. The Protein kinase domain occupies 442-702; that stretch reads ITVGQRIGSG…PQILASIELL (261 aa). ATP is bound by residues 448 to 456 and Lys-468; that span reads IGSGSFGTV. Catalysis depends on Asp-561, which acts as the Proton acceptor. A Glycyl lysine isopeptide (Lys-Gly) (interchain with G-Cter in ubiquitin) cross-link involves residue Lys-563. Arg-656 is modified (omega-N-methylarginine; by PRMT5). Residues Ser-714 and Ser-735 each carry the phosphoserine modification. At Thr-738 the chain carries Phosphothreonine; by MAPK1.

This sequence belongs to the protein kinase superfamily. TKL Ser/Thr protein kinase family. RAF subfamily. Monomer. Homodimer. Heterodimerizes with RAF1, and the heterodimer possesses a highly increased kinase activity compared to the respective homodimers or monomers. Heterodimerization is mitogen-regulated and enhanced by 14-3-3 proteins. MAPK1/ERK2 activation can induce a negative feedback that promotes the dissociation of the heterodimer by phosphorylating BRAF at Thr-738. Heterodimerizes (via N-terminus) with KSR1 (via N-terminus) or KSR2 (via N-terminus) in a MAP2K1-dependent manner. Interacts with MAP2K1 and MAP2K2. Found in a complex with at least BRAF, HRAS, MAP2K1, MAPK3 and RGS14. Interacts with RIT1. Interacts (via N-terminus) with RGS14 (via RBD domains); the interaction mediates the formation of a ternary complex with RAF1, a ternary complex inhibited by GNAI1. Interacts with DGKH. Interacts with PRMT5. Interacts with AKAP13, MAP2K1 and KSR1. Identified in a complex with AKAP13, KSR1 and MAP2K1. Interacts with FNIP1 and FNIP2. The cofactor is Zn(2+). In terms of processing, phosphorylation at Ser-348 by SGK1 inhibits its activity. Dephosphorylation of Ser-348 by the SHOC2-MRAS-PP1c (SMP) complex consisting of SHOC2, GTP-bound M-Ras/MRAS and the catalytic subunit of protein phosphatase 1 (PPP1CA, PPP1CB or PPP1CC); this relieves inactivation and stimulates kinase activity. Post-translationally, methylation by PRMT5 decreases stability and kinase activity. Ubiquitinated by RNF149; which leads to proteasomal degradation. Polyubiquitinated at Lys-615 in response to EGF.

It localises to the nucleus. The protein localises to the cytoplasm. The protein resides in the cell membrane. It catalyses the reaction L-seryl-[protein] + ATP = O-phospho-L-seryl-[protein] + ADP + H(+). The enzyme catalyses L-threonyl-[protein] + ATP = O-phospho-L-threonyl-[protein] + ADP + H(+). In quiescent cells, maintained in an inactive state via an intramolecular interaction between the protein kinase and N-terminal domains. Following mitogen-mediated cell activation, binds via its RGB domain to active HRAS (GTP-bound) which releases the inhibitory intramolecular interaction between the two domains. This allows the MAP2K1-mediated dimerization of KSR1 or KSR2, and BRAF which activates BRAF. Functionally, involved in the transduction of mitogenic signals from the cell membrane to the nucleus. Phosphorylates MAP2K1, and thereby activates the MAP kinase signal transduction pathway. Phosphorylates PFKFB2. May play a role in the postsynaptic responses of hippocampal neurons. The chain is Serine/threonine-protein kinase B-raf from Mus musculus (Mouse).